A 379-amino-acid polypeptide reads, in one-letter code: Probable G-protein coupled receptor 27 (379 aa).

The Extracellular portion of the chain corresponds to 1–26 (MANASEPGGGGSGGGAEAAALGLRLA). The N-linked (GlcNAc...) asparagine glycan is linked to Asn-3. Residues 27 to 47 (TLSLLLCVSLAGNVLFALLIV) traverse the membrane as a helical segment. At 48 to 58 (RERSLHRAPYY) the chain is on the cytoplasmic side. The chain crosses the membrane as a helical span at residues 59 to 79 (LLLDLCLADGLRALACLPAVM). Residues 80-100 (LAARRAAAAAGTPPGALGCKL) are Extracellular-facing. An intrachain disulfide couples Cys-98 to Cys-175. A helical transmembrane segment spans residues 101–121 (LAFLAALFCFHAAFLLLGVGV). Over 122–142 (TRYLAIAHHRFYAERLAGWPC) the chain is Cytoplasmic. The helical transmembrane segment at 143 to 163 (AAMLVCAAWALALAAAFPPVL) threads the bilayer. Topologically, residues 164–185 (DGGGADDEDAPCALEQRPDGAP) are extracellular. The helical transmembrane segment at 186-206 (GALGFLLLLAAVVGATHLVYL) threads the bilayer. Over 207–289 (RLLFFIHDRR…FKTEKRLCKM (83 aa)) the chain is Cytoplasmic. The chain crosses the membrane as a helical span at residues 290–310 (FYAITLLFLLLWGPYVVASYL). Topologically, residues 311-324 (RVLVRPGAVPQAYL) are extracellular. The helical transmembrane segment at 325–345 (TASVWLTFAQAGINPVVCFLF) threads the bilayer. The Cytoplasmic portion of the chain corresponds to 346–379 (NRELRDCFRAQFPCCQSPQATQATLPCDLKGIGL).

It belongs to the G-protein coupled receptor 1 family.

Its subcellular location is the cell membrane. Functionally, orphan receptor. Possible candidate for amine-like G-protein coupled receptor. This is Probable G-protein coupled receptor 27 (Gpr27) from Mus musculus (Mouse).